The following is a 239-amino-acid chain: Aspartate/glutamate leucyltransferase (239 aa).

The protein belongs to the R-transferase family. Bpt subfamily.

It localises to the cytoplasm. The catalysed reaction is N-terminal L-glutamyl-[protein] + L-leucyl-tRNA(Leu) = N-terminal L-leucyl-L-glutamyl-[protein] + tRNA(Leu) + H(+). It catalyses the reaction N-terminal L-aspartyl-[protein] + L-leucyl-tRNA(Leu) = N-terminal L-leucyl-L-aspartyl-[protein] + tRNA(Leu) + H(+). Its function is as follows. Functions in the N-end rule pathway of protein degradation where it conjugates Leu from its aminoacyl-tRNA to the N-termini of proteins containing an N-terminal aspartate or glutamate. The polypeptide is Aspartate/glutamate leucyltransferase (Campylobacter jejuni subsp. jejuni serotype O:23/36 (strain 81-176)).